Consider the following 867-residue polypeptide: Mitochondrial escape protein 2 (867 aa).

Residues 1–25 (MIIRTLRSQLRLPKPVYISPPCRYY) constitute a mitochondrion transit peptide. Residues 26 to 279 (STDLEKLKKE…LVSLISNHTK (254 aa)) lie on the Mitochondrial matrix side of the membrane. Residues 179–264 (GTPWIEDLRR…TTLHIQFVAI (86 aa)) enclose the RRM domain. A helical membrane pass occupies residues 280 to 300 (IAIPVLIALLATFAVLIFDPI). The Mitochondrial intermembrane segment spans residues 301–867 (REWFIEYKIL…DGKSFLGIKF (567 aa)). Positions 795 to 852 (IGRLISLEAAKIQKLEEELEKIYKIGKVDGRIDYVSQKIEASNKKILDLEKQAADVAS) form a coiled coil.

It belongs to the YME2 family.

The protein resides in the mitochondrion inner membrane. Functionally, plays a role in maintaining the mitochondrial genome and in controlling the mtDNA escape. Involved in the regulation of mtDNA nucleotide structure and number. May have a dispensable role in early maturation of pre-rRNA. This Candida albicans (strain SC5314 / ATCC MYA-2876) (Yeast) protein is Mitochondrial escape protein 2 (PRP13).